A 141-amino-acid polypeptide reads, in one-letter code: Nucleoside diphosphate kinase (141 aa).

ATP-binding residues include Lys-11, Phe-59, Arg-87, Thr-93, Arg-104, and Asn-114. His-117 functions as the Pros-phosphohistidine intermediate in the catalytic mechanism.

It belongs to the NDK family. In terms of assembly, homotetramer. Requires Mg(2+) as cofactor.

It localises to the cytoplasm. It catalyses the reaction a 2'-deoxyribonucleoside 5'-diphosphate + ATP = a 2'-deoxyribonucleoside 5'-triphosphate + ADP. The enzyme catalyses a ribonucleoside 5'-diphosphate + ATP = a ribonucleoside 5'-triphosphate + ADP. Its function is as follows. Major role in the synthesis of nucleoside triphosphates other than ATP. The ATP gamma phosphate is transferred to the NDP beta phosphate via a ping-pong mechanism, using a phosphorylated active-site intermediate. The protein is Nucleoside diphosphate kinase of Xylella fastidiosa (strain M23).